The chain runs to 405 residues: NADH-quinone oxidoreductase subunit D (405 aa).

Belongs to the complex I 49 kDa subunit family. In terms of assembly, NDH-1 is composed of 14 different subunits. Subunits NuoB, C, D, E, F, and G constitute the peripheral sector of the complex.

The protein localises to the cell inner membrane. The catalysed reaction is a quinone + NADH + 5 H(+)(in) = a quinol + NAD(+) + 4 H(+)(out). NDH-1 shuttles electrons from NADH, via FMN and iron-sulfur (Fe-S) centers, to quinones in the respiratory chain. The immediate electron acceptor for the enzyme in this species is believed to be ubiquinone. Couples the redox reaction to proton translocation (for every two electrons transferred, four hydrogen ions are translocated across the cytoplasmic membrane), and thus conserves the redox energy in a proton gradient. The polypeptide is NADH-quinone oxidoreductase subunit D (Sphingopyxis alaskensis (strain DSM 13593 / LMG 18877 / RB2256) (Sphingomonas alaskensis)).